A 178-amino-acid chain; its full sequence is MSRIGKRIIEIPSSVQASVEGSKLLFKNNKEKHELETHNRVKITLENNQLSFQPVGEDAQFRAYWGTYGALANNIVIGLSAGFSKTLEVNGVGYKVALGHKTLDLSLGFSHPVKYPIPAGIEMVVEKNTITIKGSDKQQVGQVAAEIRSFRPPEPYKGKGVKYSNEVIIRKAGKTAKK.

Belongs to the universal ribosomal protein uL6 family. As to quaternary structure, part of the 50S ribosomal subunit.

Functionally, this protein binds to the 23S rRNA, and is important in its secondary structure. It is located near the subunit interface in the base of the L7/L12 stalk, and near the tRNA binding site of the peptidyltransferase center. This chain is Large ribosomal subunit protein uL6, found in Helicobacter pylori (strain J99 / ATCC 700824) (Campylobacter pylori J99).